We begin with the raw amino-acid sequence, 487 residues long: MTVQTAQIVKNYIGGEWVESISTKMEAVYNPATGEVIAQVPLSTKGDVEQAVLAANEAFKSWSKTAVPKRARILFKYQQLLVDNWEELAKLITIENGKSYNEAYGEVLRGIECVEFAAGAPTLMMGKQLPDIATGIESGMYRYPIGVIGGITPFNFPMMVPCWMFPLAIACGNTFVLKPSERTPLLAARLAELAEEAGLPKGVLNIVNGAHDVVNGLLEHKLVKAISFVGSQPVAEYVYKKGTENLKRVQALAGAKNHSIVLNDANLELATKQIISAAFGSAGERCMAASVVTVEEEIADQLVERLVEEANKIVIGNGLDEDVFLGPVIRDNHKERTIGYIDSGVEQGATLVRDGREDTAVKGAGYFVGPTIFDHVTKEMKIWQDEIFAPVLSIVRVKSLDEAIEIANESRFANGACIYTDSGASVRQFRETIESGMLGVNVGVPAPMAFFPFSGWKDSFYGDLHANGTDGVEFYTRKKMLTSRWEK.

Residues Phe-154, Lys-178, Glu-181, Arg-182, and Ser-231 each coordinate NAD(+). Cys-286 acts as the Nucleophile in catalysis. An NAD(+)-binding site is contributed by Glu-386.

This sequence belongs to the aldehyde dehydrogenase family. IolA subfamily. In terms of assembly, homotetramer.

It carries out the reaction 3-oxopropanoate + NAD(+) + CoA + H2O = hydrogencarbonate + acetyl-CoA + NADH + H(+). The catalysed reaction is 2-methyl-3-oxopropanoate + NAD(+) + CoA + H2O = propanoyl-CoA + hydrogencarbonate + NADH + H(+). The protein operates within polyol metabolism; myo-inositol degradation into acetyl-CoA; acetyl-CoA from myo-inositol: step 7/7. Functionally, catalyzes the oxidation of malonate semialdehyde (MSA) and methylmalonate semialdehyde (MMSA) into acetyl-CoA and propanoyl-CoA, respectively. Is involved in a myo-inositol catabolic pathway. Bicarbonate, and not CO2, is the end-product of the enzymatic reaction. This is Malonate-semialdehyde dehydrogenase 2 from Bacillus thuringiensis (strain Al Hakam).